The chain runs to 151 residues: uncharacterized protein (151 aa).

4Fe-4S ferredoxin-type domains lie at 4-32 (KIIV…ESRV), 33-63 (RKVD…YLKD), and 64-93 (GIPI…IKNR). Cys-13, Cys-16, Cys-19, Cys-23, Cys-42, Cys-45, Cys-50, Cys-54, Cys-73, Cys-76, Cys-79, Cys-83, Cys-98, Cys-101, Cys-111, and Cys-115 together coordinate [4Fe-4S] cluster.

Requires [4Fe-4S] cluster as cofactor.

This is an uncharacterized protein from Methanocaldococcus jannaschii (strain ATCC 43067 / DSM 2661 / JAL-1 / JCM 10045 / NBRC 100440) (Methanococcus jannaschii).